Here is a 414-residue protein sequence, read N- to C-terminus: 25-hydroxycholesterol 7-alpha-hydroxylase (414 aa).

Residue Cys354 coordinates heme.

Belongs to the cytochrome P450 family. Requires heme as cofactor. As to expression, highly expressed in brain; also expressed in liver and kidney.

Its subcellular location is the endoplasmic reticulum membrane. The protein localises to the microsome membrane. It catalyses the reaction 25-hydroxycholesterol + reduced [NADPH--hemoprotein reductase] + O2 = 7alpha,25-dihydroxycholesterol + oxidized [NADPH--hemoprotein reductase] + H2O + H(+). The enzyme catalyses (25R)-cholest-5-ene-3beta,26-diol + reduced [NADPH--hemoprotein reductase] + O2 = (25R)-cholest-5-en-3beta,7alpha,26-triol + oxidized [NADPH--hemoprotein reductase] + H2O + H(+). It functions in the pathway lipid metabolism; bile acid biosynthesis. Its function is as follows. Oxysterol 7alpha-hydroxylase that mediates formation of 7-alpha,25-dihydroxycholesterol (7-alpha,25-OHC) from 25-hydroxycholesterol. Plays a key role in cell positioning and movement in lymphoid tissues: 7-alpha,25-dihydroxycholesterol (7-alpha,25-OHC) acts as a ligand for the G protein-coupled receptor GPR183/EBI2, a chemotactic receptor for a number of lymphoid cells. In Rattus norvegicus (Rat), this protein is 25-hydroxycholesterol 7-alpha-hydroxylase (Cyp7b1).